The chain runs to 297 residues: Transmembrane protein 178A (297 aa).

An N-terminal signal peptide occupies residues 1 to 25 (MEPRALVTALSLGLSLCSLGLLVTA). Residues 26 to 179 (IFTDHWYETD…LLHLRRITAG (154 aa)) are Extracellular-facing. Basic and acidic residues predominate over residues 41-57 (ESCERSRAGADPPDQKN). The interval 41–86 (ESCERSRAGADPPDQKNRLMPLSHLPLRDSPPLGRRLLPGGPGRSD) is disordered. Low complexity predominate over residues 68–79 (RDSPPLGRRLLP). N-linked (GlcNAc...) asparagine glycosylation is present at N158. The chain crosses the membrane as a helical span at residues 180–200 (FLGMAVAVLLCGCIVATVSFF). Topologically, residues 201-208 (WEESLTQH) are cytoplasmic. Residues 209–229 (VAGLLFLMTGIFCTISLCTYA) form a helical membrane-spanning segment. Residues 230-257 (ASVSYDLNRVPKLIYSLPHDVEHGYSWS) lie on the Extracellular side of the membrane. Residues 258-278 (IFCAWCSLGFIVAAGGLCIAY) traverse the membrane as a helical segment. At 279-297 (PFISRTKIAHLKSGRDSTV) the chain is on the cytoplasmic side.

Belongs to the TMEM178 family. In terms of assembly, interacts with STIM1.

It localises to the endoplasmic reticulum membrane. Acts as a negative regulator of osteoclast differentiation in basal and inflammatory conditions by regulating TNFSF11-induced Ca (2+) fluxes, thereby controlling the induction of NFATC1. The sequence is that of Transmembrane protein 178A (Tmem178a) from Rattus norvegicus (Rat).